The following is a 239-amino-acid chain: Lactate utilization protein A 1 (239 aa).

Belongs to the LutA/YkgE family.

Functionally, is involved in L-lactate degradation and allows cells to grow with lactate as the sole carbon source. This is Lactate utilization protein A 1 from Bacillus anthracis (strain A0248).